Reading from the N-terminus, the 367-residue chain is Dual-specificity RNA methyltransferase RlmN (367 aa).

Glutamate 93 (proton acceptor) is an active-site residue. Positions 99-333 (EEDRATLCVS…VIVRKTRGDD (235 aa)) constitute a Radical SAM core domain. Cysteine 106 and cysteine 338 are disulfide-bonded. [4Fe-4S] cluster is bound by residues cysteine 113, cysteine 117, and cysteine 120. S-adenosyl-L-methionine-binding positions include 162 to 163 (GE), serine 194, 216 to 218 (SLH), and asparagine 295. The active-site S-methylcysteine intermediate is the cysteine 338.

Belongs to the radical SAM superfamily. RlmN family. Requires [4Fe-4S] cluster as cofactor.

Its subcellular location is the cytoplasm. It catalyses the reaction adenosine(2503) in 23S rRNA + 2 reduced [2Fe-2S]-[ferredoxin] + 2 S-adenosyl-L-methionine = 2-methyladenosine(2503) in 23S rRNA + 5'-deoxyadenosine + L-methionine + 2 oxidized [2Fe-2S]-[ferredoxin] + S-adenosyl-L-homocysteine. The catalysed reaction is adenosine(37) in tRNA + 2 reduced [2Fe-2S]-[ferredoxin] + 2 S-adenosyl-L-methionine = 2-methyladenosine(37) in tRNA + 5'-deoxyadenosine + L-methionine + 2 oxidized [2Fe-2S]-[ferredoxin] + S-adenosyl-L-homocysteine. In terms of biological role, specifically methylates position 2 of adenine 2503 in 23S rRNA and position 2 of adenine 37 in tRNAs. m2A2503 modification seems to play a crucial role in the proofreading step occurring at the peptidyl transferase center and thus would serve to optimize ribosomal fidelity. This is Dual-specificity RNA methyltransferase RlmN from Aeromonas hydrophila subsp. hydrophila (strain ATCC 7966 / DSM 30187 / BCRC 13018 / CCUG 14551 / JCM 1027 / KCTC 2358 / NCIMB 9240 / NCTC 8049).